A 65-amino-acid polypeptide reads, in one-letter code: Large ribosomal subunit protein uL29 (65 aa).

This sequence belongs to the universal ribosomal protein uL29 family.

This Dehalococcoides mccartyi (strain ATCC BAA-2100 / JCM 16839 / KCTC 5957 / BAV1) protein is Large ribosomal subunit protein uL29.